A 161-amino-acid chain; its full sequence is Lipoprotein signal peptidase (161 aa).

A run of 4 helical transmembrane segments spans residues 8-28 (LKYF…KYLA), 40-60 (ITSF…SLLS), 67-87 (QMIM…YLII), and 91-111 (ITEK…LGNF). Catalysis depends on residues D122 and D140. A helical membrane pass occupies residues 136–156 (FNIADSAITCGVVILIAASLF).

Belongs to the peptidase A8 family.

The protein localises to the cell inner membrane. It carries out the reaction Release of signal peptides from bacterial membrane prolipoproteins. Hydrolyzes -Xaa-Yaa-Zaa-|-(S,diacylglyceryl)Cys-, in which Xaa is hydrophobic (preferably Leu), and Yaa (Ala or Ser) and Zaa (Gly or Ala) have small, neutral side chains.. It functions in the pathway protein modification; lipoprotein biosynthesis (signal peptide cleavage). This protein specifically catalyzes the removal of signal peptides from prolipoproteins. This Francisella tularensis subsp. novicida (strain U112) protein is Lipoprotein signal peptidase.